Reading from the N-terminus, the 525-residue chain is MTQARRPLMLIIFDGWGYREAKEGNAVMTARTPNLDRLEKECPWCFLKASGEAVGLPKGMMGNSEVGHLTIGAGRIVNQDLTRINISIKNGDFFKNPVFLNAISNVKANASSLHLMGLASCGGIHSYMPHLHALLKLVQEKDLKKVYIHAFLDGRDEPPKAALGDIKKLDAFCKEHGNAKIATVSGRYYAMDRDKRWDRTKLAYDALTRGVAPYTAPNAETAVSNAYSRGETDEFVKPTIITEQVITEQVITEQAEKPVATVQDNDSVIFFNFRADRARQITWAFVKDDFDGFMREKRPEVYFVCMTQYDETLEVPIAFPPIKLENVLGEVLSKHGLIQLRIAETEKYAHVTYFLNGGEEKRYKDEDRCLIPSPKIATYDLKPEMSAYEITDEVIRRIQSGKYDVIVLNFANMDMVGHTGIFEAAVKAVEAVDKCIGRIVEVLKEKGGVALITADHGNAEEMIDLKTGEPHTAHTSNPVKCIYFGNSEIKALRNGKLCDVAPTILELLGIPKPQEMTGKSLLVKD.

Mn(2+) contacts are provided by Asp14 and Ser64. Catalysis depends on Ser64, which acts as the Phosphoserine intermediate. Substrate-binding positions include His125, 155 to 156 (RD), Arg187, Arg193, 274 to 277 (RADR), and Lys347. Mn(2+) contacts are provided by Asp414, His418, Asp455, His456, and His474.

It belongs to the BPG-independent phosphoglycerate mutase family. Mn(2+) serves as cofactor.

The catalysed reaction is (2R)-2-phosphoglycerate = (2R)-3-phosphoglycerate. Its pathway is carbohydrate degradation; glycolysis; pyruvate from D-glyceraldehyde 3-phosphate: step 3/5. Its function is as follows. Catalyzes the interconversion of 2-phosphoglycerate and 3-phosphoglycerate. The chain is 2,3-bisphosphoglycerate-independent phosphoglycerate mutase 2 from Methanosarcina barkeri (strain Fusaro / DSM 804).